The primary structure comprises 125 residues: UPF0325 protein Ping_0715 (125 aa).

This sequence belongs to the UPF0325 family.

The protein is UPF0325 protein Ping_0715 of Psychromonas ingrahamii (strain DSM 17664 / CCUG 51855 / 37).